A 127-amino-acid chain; its full sequence is PRA1 family protein C (127 aa).

3 consecutive transmembrane segments (helical) span residues 15–35 (IFISMLWQPVHLSVFVILIVA), 53–73 (VIDDSTLVLVLLVLTIGIFLL), and 76–96 (VSRGIVIGVLAGLPVVLVHGM).

It belongs to the PRA1 family.

It localises to the endoplasmic reticulum membrane. Functionally, may be involved in both secretory and endocytic intracellular trafficking in the endosomal/prevacuolar compartments. The sequence is that of PRA1 family protein C (PRA1C) from Arabidopsis thaliana (Mouse-ear cress).